We begin with the raw amino-acid sequence, 578 residues long: Monooxygenase cfoE (578 aa).

A helical transmembrane segment spans residues I549–F569.

Belongs to the FMO family. FAD serves as cofactor.

It is found in the membrane. The protein operates within secondary metabolite biosynthesis; flavonoid biosynthesis. Monooxygenase; part of the gene cluster that mediates the biosynthesis of chlorflavonin, a fungal flavonoid with acetolactate synthase inhibitory activity. Within the pathway, cfoE is responsible for the chlorination of the flavonoid skeleton at position C3'. The pathway begins with the PKS-NRPS hybrid synthetase cfoA that uses benzoic acid or p-hydroxybenzoic acid as a starter unit with four rounds of chain elongation using malonyl-CoA to form the chalcone skeleton. Then, a new type of chalcone isomerase, cfoK, catalyzes the conversion of the chalcone into a flavanone by a histidine-mediated oxa-Michael addition mechanism. The desaturation of flavanone to flavone is catalyzed by a new type of flavone synthase, the flavin mononucleotide (FMN)-dependent oxidoreductase cfoJ. Monooxygenases cfoF, cfoG, and P450 cfoH are responsible for the hydroxylation of the flavonoid skeleton at sites C3, C8, and C2', respectively. Like cfoF, the dehydratase cfoI plays also a role in the hydroxylation of position C3. Methyltransferases cfoB, cfoC, and cfoD then catalyze the methylation of C7-OH, C8-OH, and C3-OH, respectively. Finally, the monooxygenase cfoE is responsible for the chlorination of flavonoid at position C3'. The sequence is that of Monooxygenase cfoE from Aspergillus candidus.